The chain runs to 328 residues: tRNA uridine(34) hydroxylase (328 aa).

A Rhodanese domain is found at 130-224 (LDEDTVVLDT…YGKDPEVQGE (95 aa)). Cys184 (cysteine persulfide intermediate) is an active-site residue.

This sequence belongs to the TrhO family.

It catalyses the reaction uridine(34) in tRNA + AH2 + O2 = 5-hydroxyuridine(34) in tRNA + A + H2O. In terms of biological role, catalyzes oxygen-dependent 5-hydroxyuridine (ho5U) modification at position 34 in tRNAs. The chain is tRNA uridine(34) hydroxylase from Streptococcus gordonii (strain Challis / ATCC 35105 / BCRC 15272 / CH1 / DL1 / V288).